A 565-amino-acid polypeptide reads, in one-letter code: Wee1-like protein kinase 2 (565 aa).

Disordered stretches follow at residues 18–78 and 169–191; these read YCEE…KSPE and KSNGKRKTRGDFEEAGPGEGNVE. Over residues 19-29 the composition is skewed to acidic residues; it reads CEEESESEGQE. The segment covering 31-51 has biased composition (basic and acidic residues); it reads WETRDAHSQIPDRAEGQESEA. Serine 76 is modified (phosphoserine). The Nuclear localization signal motif lies at 173–175; sequence KRK. The region spanning 214–492 is the Protein kinase domain; the sequence is FLEVEKIGVG…ARSRVLRPSL (279 aa). Residues 220-228 and lysine 243 contribute to the ATP site; that span reads IGVGEFGTV. Residues 317-331 carry the Nuclear export signal motif; the sequence is KLKDILLQISLGLKY. The active-site Proton acceptor is the aspartate 341. Asparagine 346 and aspartate 382 together coordinate Mg(2+). The stretch at 495-521 forms a coiled coil; that stretch reads AEELQQQLNLEKFKTATLERELREAQQ. Positions 521–565 are disordered; that stretch reads QAWFSQEERGDAGVSGTPTGSRSTKRLVGGKSAKSSSFTWGKSSP. The segment covering 553 to 565 has biased composition (polar residues); the sequence is AKSSSFTWGKSSP.

It belongs to the protein kinase superfamily. Ser/Thr protein kinase family. WEE1 subfamily. In terms of processing, phosphorylation leads to increase its activity.

It localises to the nucleus. It catalyses the reaction L-tyrosyl-[protein] + ATP = O-phospho-L-tyrosyl-[protein] + ADP + H(+). Functionally, oocyte-specific protein tyrosine kinase that phosphorylates and inhibits CDK1 and acts as a key regulator of meiosis during both prophase I and metaphase II. Required to maintain meiotic arrest in oocytes during the germinal vesicle (GV) stage, a long period of quiescence at dictyate prophase I, by phosphorylating CDK1 at 'Tyr-15', leading to inhibit CDK1 activity and prevent meiotic reentry. Also required for metaphase II exit during egg activation by phosphorylating CDK1 at 'Tyr-15', to ensure exit from meiosis in oocytes and promote pronuclear formation. The sequence is that of Wee1-like protein kinase 2 (WEE2) from Ailuropoda melanoleuca (Giant panda).